Reading from the N-terminus, the 311-residue chain is Malate dehydrogenase (311 aa).

Residue glycine 10–glycine 15 coordinates NAD(+). The substrate site is built by arginine 85 and arginine 91. NAD(+) is bound by residues asparagine 98 and leucine 121–asparagine 123. Substrate is bound by residues asparagine 123 and arginine 154. Histidine 178 serves as the catalytic Proton acceptor.

Belongs to the LDH/MDH superfamily. MDH type 3 family.

The enzyme catalyses (S)-malate + NAD(+) = oxaloacetate + NADH + H(+). Catalyzes the reversible oxidation of malate to oxaloacetate. The sequence is that of Malate dehydrogenase from Staphylococcus carnosus (strain TM300).